Here is a 314-residue protein sequence, read N- to C-terminus: uncharacterized protein (314 aa).

This is an uncharacterized protein from Methanocaldococcus jannaschii (strain ATCC 43067 / DSM 2661 / JAL-1 / JCM 10045 / NBRC 100440) (Methanococcus jannaschii).